Here is a 179-residue protein sequence, read N- to C-terminus: Guanosine-3',5'-bis(diphosphate) 3'-pyrophosphohydrolase MESH1 (179 aa).

The region spanning 32–127 (YINHPLGVAR…VKLADKLYNL (96 aa)) is the HD domain. Positions 35, 61, and 62 each coordinate Mn(2+). Catalysis depends on nucleophile residues E65 and D66. A Mn(2+)-binding site is contributed by D122.

The protein belongs to the MESH1 family. Mn(2+) serves as cofactor.

The enzyme catalyses guanosine 3',5'-bis(diphosphate) + H2O = GDP + diphosphate + H(+). PpGpp hydrolyzing enzyme involved in starvation response. In Xenopus tropicalis (Western clawed frog), this protein is Guanosine-3',5'-bis(diphosphate) 3'-pyrophosphohydrolase MESH1 (hddc3).